Here is a 385-residue protein sequence, read N- to C-terminus: AA13 family lytic polysaccharide monooxygenase aasA (385 aa).

The first 18 residues, 1–18 (MKSLLALVAGNLVTAVSG), serve as a signal peptide directing secretion. A Cu(2+)-binding site is contributed by H19. Position 19 is a methylhistidine (H19). Residues 19 to 248 (HGYLTVPASR…AQVYLHCADI (230 aa)) form an N-terminal catalytic module region. 7 cysteine pairs are disulfide-bonded: C40-C43, C66-C245, C102-C203, C118-C145, C153-C161, C167-C173, and C181-C192. A Cu(2+)-binding site is contributed by H109. An N-linked (GlcNAc...) asparagine glycan is attached at N120. A Cu(2+)-binding site is contributed by Y242. The segment at 254-276 (SGSSPSPTSTTSTATSTTTPSST) is disordered. Low complexity predominate over residues 256–276 (SSPSPTSTTSTATSTTTPSST). The CBM20 domain maps to 278-385 (CASAISIPVT…TTATESGAWR (108 aa)). N-linked (GlcNAc...) asparagine glycosylation occurs at N364.

It belongs to the polysaccharide monooxygenase AA13 family. Cu(2+) is required as a cofactor. The catalytically essential N-terminal histidine His-19 is post-translationally modified by methylation to prevent protonation of the histidine side chain, and protect the critical active site of the enzyme from oxidative damage.

Its subcellular location is the secreted. The enzyme catalyses starch + reduced acceptor + O2 = D-glucono-1,5-lactone-terminated malto-oligosaccharides + short-chain malto-oligosaccharides + acceptor + H2O.. Starch-active polysaccharide monooxygenase that oxidizes the C1 position of starch substrates, but not in cellulose, chitin, polygalacturonan or esterified pectin, nor with Arabidopsis stem cell walls. Catalysis by LPMOs requires the reduction of the active-site copper from Cu(II) to Cu(I) by a reducing agent and H(2)O(2) or O(2) as a cosubstrate. This Emericella nidulans (strain FGSC A4 / ATCC 38163 / CBS 112.46 / NRRL 194 / M139) (Aspergillus nidulans) protein is AA13 family lytic polysaccharide monooxygenase aasA.